Consider the following 283-residue polypeptide: Malonyl-[acyl-carrier protein] O-methyltransferase (283 aa).

This sequence belongs to the methyltransferase superfamily.

The catalysed reaction is malonyl-[ACP] + S-adenosyl-L-methionine = malonyl-[ACP] methyl ester + S-adenosyl-L-homocysteine. Its pathway is cofactor biosynthesis; biotin biosynthesis. In terms of biological role, converts the free carboxyl group of a malonyl-thioester to its methyl ester by transfer of a methyl group from S-adenosyl-L-methionine (SAM). It allows to synthesize pimeloyl-ACP via the fatty acid synthetic pathway. This chain is Malonyl-[acyl-carrier protein] O-methyltransferase, found in Acetivibrio thermocellus (strain ATCC 27405 / DSM 1237 / JCM 9322 / NBRC 103400 / NCIMB 10682 / NRRL B-4536 / VPI 7372) (Clostridium thermocellum).